Here is a 212-residue protein sequence, read N- to C-terminus: Amelotin (212 aa).

The first 16 residues, 1 to 16 (MKTVVLLLCLLGSAQS), serve as a signal peptide directing secretion. 2 disordered regions span residues 23-42 (PALG…PLTQ) and 141-212 (PSGQ…NRTK). Polar residues-rich tracts occupy residues 33–42 (TPGQVTPLTQ) and 165–178 (PANQ…TTPA).

Belongs to the amelotin family. O-glycosylated. In terms of processing, phosphorylated by FAM20C in vitro. In terms of tissue distribution, highest expression in the mandible. Found in the basal lamina of maturation stage ameloblasts of incisors and unerupted molars. Also found in the internal basal lamina of junctional epithelium in molars.

It is found in the secreted. Is a promoter of calcium phosphate mineralization, playing a critical role in the formation of the compact, mineralized, aprismatic enamel surface layer during the maturation stage of amelogenesis. The sequence is that of Amelotin from Rattus norvegicus (Rat).